Here is a 450-residue protein sequence, read N- to C-terminus: Molybdate-anion transporter (450 aa).

Transmembrane regions (helical) follow at residues 1 to 21, 43 to 63, 79 to 99, 128 to 148, 176 to 196, 198 to 218, 249 to 269, 278 to 298, 311 to 331, 344 to 364, 376 to 396, and 409 to 429; these read MLVT…GLEL, LDFY…APYL, ILYV…SSLV, FVLL…FSAF, FWNH…ACWM, LGPV…GALA, VLLL…FVFL, GAPL…GSSL, PMHL…MLTF, FIAF…MSFL, GVLN…LLVL, and FSIC…LFTV.

This sequence belongs to the major facilitator superfamily.

Its subcellular location is the cell membrane. Its function is as follows. Mediates high-affinity intracellular uptake of the rare oligo-element molybdenum. This is Molybdate-anion transporter (MFSD5) from Bos taurus (Bovine).